The chain runs to 412 residues: Peptidase T (412 aa).

Histidine 78 provides a ligand contact to Zn(2+). Aspartate 80 is an active-site residue. Aspartate 140 is a binding site for Zn(2+). Glutamate 174 functions as the Proton acceptor in the catalytic mechanism. Residues glutamate 175, aspartate 197, and histidine 379 each contribute to the Zn(2+) site.

Belongs to the peptidase M20B family. The cofactor is Zn(2+).

The protein resides in the cytoplasm. It carries out the reaction Release of the N-terminal residue from a tripeptide.. In terms of biological role, cleaves the N-terminal amino acid of tripeptides. This is Peptidase T from Staphylococcus epidermidis (strain ATCC 12228 / FDA PCI 1200).